Consider the following 367-residue polypeptide: Germination protease (367 aa).

Positions 1–15 (MKEPLDLSKYAVRTD) are excised as a propeptide.

The protein belongs to the peptidase A25 family. Homotetramer. In terms of processing, autoproteolytically processed. The inactive tetrameric zymogen termed p46 autoprocesses to a smaller form termed p41, which is active only during spore germination.

The enzyme catalyses Endopeptidase action with P4 Glu or Asp, P1 preferably Glu &gt; Asp, P1' hydrophobic and P2' Ala.. Initiates the rapid degradation of small, acid-soluble proteins during spore germination. This chain is Germination protease, found in Bacillus cytotoxicus (strain DSM 22905 / CIP 110041 / 391-98 / NVH 391-98).